Consider the following 799-residue polypeptide: MANILKKIYDNDRRELKKFEKLATKVESLADEYEKLSDEQLQAKTPEFRKRLEKGETLDDLLPEAFATAREGAKRVLGLYPFRVQIIGGIALHYGNIAEMMTGEGKTLTATLPVYLNALTGKGVHVVTVNEYLSSRDESEMGQLYKWLGLTVGLNLNSMSADEKRDAYNCDVTYSTNSELGFDYLRDNMVVYKDQMVQRPLNYAIIDEVDSILIDEARTPLIISGQAEQANSEYIRADRFVKTLTEDKSDDDADDDEDHGDYKIDWPTKTINLTNQGIKKACEHFGLKNLYDIDNQVLVHHIDQALRANYIMLKDIDYVVQNGEVMIVDSFTGRVMEGRRYSDGLHQAIEAKEGVKIQEESKTQATITYQNFFRMYKKLAGMTGTAKTEEEEFREIYNMEVITIPTNRPIARKDLPDILYPTLDSKFEAVVKEIKERHAKGQPVLVGTVAIESSERLSKMLDQAGIPHAVLNAKNHAKEAEIIMNAGQRGAVTIATNMAGRGTDIKLGPGVKELGGLAVIGTERHESRRIDNQLRGRSGRQGDPGVTRFYLSLEDDLMKRFGGDRVKLFLDRISDNDDDKVIESRMITKQVESAQKRVEGNNYDTRKQTLQYDDVMRTQREIIYGERMQVISEEKTLKPVLMPMIKRTIDHQVDMYTQGDKKDWRNDQLRDFISSAITDEETTKKLNIKHLGAEELKKRLYKIAEDNYAEKEKQLADPEQMLEFEKVVILRVVDERWTDHIDAMDQLRQSISLRGYGQLNPLVEYQEAGYRMFEEMISDIEFDATRLFMKAQIRQNISR.

ATP-binding positions include Gln85, 103–107, and Asp504; that span reads GEGKT.

It belongs to the SecA family. Monomer and homodimer. Part of the essential Sec protein translocation apparatus which comprises SecA, SecYEG and auxiliary proteins SecDF. Other proteins may also be involved.

The protein resides in the cell membrane. The protein localises to the cytoplasm. It carries out the reaction ATP + H2O + cellular proteinSide 1 = ADP + phosphate + cellular proteinSide 2.. Functionally, part of the Sec protein translocase complex. Interacts with the SecYEG preprotein conducting channel. Has a central role in coupling the hydrolysis of ATP to the transfer of proteins into and across the cell membrane, serving as an ATP-driven molecular motor driving the stepwise translocation of polypeptide chains across the membrane. The protein is Protein translocase subunit SecA of Lactobacillus gasseri (strain ATCC 33323 / DSM 20243 / BCRC 14619 / CIP 102991 / JCM 1131 / KCTC 3163 / NCIMB 11718 / NCTC 13722 / AM63).